We begin with the raw amino-acid sequence, 110 residues long: UPF0060 membrane protein AHA_2410 (110 aa).

The next 4 membrane-spanning stretches (helical) occupy residues 8–28 (GLFL…YLWL), 33–53 (SVWL…LLSL), 63–83 (AAYG…VDGI), and 87–107 (LWDL…MFAP).

The protein belongs to the UPF0060 family.

It localises to the cell inner membrane. In Aeromonas hydrophila subsp. hydrophila (strain ATCC 7966 / DSM 30187 / BCRC 13018 / CCUG 14551 / JCM 1027 / KCTC 2358 / NCIMB 9240 / NCTC 8049), this protein is UPF0060 membrane protein AHA_2410.